Reading from the N-terminus, the 739-residue chain is Polyribonucleotide nucleotidyltransferase (739 aa).

Mg(2+) is bound by residues Asp-488 and Asp-494. In terms of domain architecture, KH spans 555–614 (PKIVTLKINPDKIRDVIGPGGKVINGIIDETGVKIDIDQDGTVFIASTDQDGINHARQLI). One can recognise an S1 motif domain in the interval 624–692 (GEEFDGTVRR…DKGRVNASHK (69 aa)). Residues 698–739 (GMSPEDRAAYDEKKKTERDSRPPRRDTGSRPPRDGQRPPRRN) are disordered. The segment covering 701-739 (PEDRAAYDEKKKTERDSRPPRRDTGSRPPRDGQRPPRRN) has biased composition (basic and acidic residues).

Belongs to the polyribonucleotide nucleotidyltransferase family. The cofactor is Mg(2+).

The protein resides in the cytoplasm. It carries out the reaction RNA(n+1) + phosphate = RNA(n) + a ribonucleoside 5'-diphosphate. Its function is as follows. Involved in mRNA degradation. Catalyzes the phosphorolysis of single-stranded polyribonucleotides processively in the 3'- to 5'-direction. The polypeptide is Polyribonucleotide nucleotidyltransferase (Exiguobacterium sibiricum (strain DSM 17290 / CCUG 55495 / CIP 109462 / JCM 13490 / 255-15)).